The primary structure comprises 449 residues: Sensor protein QseC (449 aa).

Residues 1 to 12 (MKFTQRLSLRVR) are Cytoplasmic-facing. Residues 13–33 (LTLIFLILASVTWLLSSFVAW) traverse the membrane as a helical segment. The Periplasmic portion of the chain corresponds to 34–156 (KQTTDNVDEL…QEWEYREDMA (123 aa)). A helical transmembrane segment spans residues 157-177 (LAIVAGQLIPWLVALPIMLII). Residues 178–449 (MMVLLGRELA…QGGFEAKVSW (272 aa)) are Cytoplasmic-facing. The Histidine kinase domain maps to 243–449 (DAAHELRSPL…QGGFEAKVSW (207 aa)). H246 is modified (phosphohistidine; by autocatalysis).

It is found in the cell inner membrane. The catalysed reaction is ATP + protein L-histidine = ADP + protein N-phospho-L-histidine.. In terms of biological role, member of a two-component regulatory system QseB/QseC. Activates the flagella regulon by activating transcription of FlhDC. May activate QseB by phosphorylation. The sequence is that of Sensor protein QseC (qseC) from Escherichia coli (strain K12).